Reading from the N-terminus, the 985-residue chain is Alpha-glucosidase (985 aa).

A signal peptide spans 1 to 25 (MAGLKSFLASSWLLPVACGASQSIV). N-linked (GlcNAc...) asparagine glycosylation is found at Asn126, Asn145, Asn220, Asn255, Asn349, and Asn424. Asp492 (nucleophile) is an active-site residue. The active site involves Glu495. 5 N-linked (GlcNAc...) asparagine glycosylation sites follow: Asn508, Asn536, Asn539, Asn602, and Asn624. Catalysis depends on Asp660, which acts as the Proton donor. 5 N-linked (GlcNAc...) asparagine glycosylation sites follow: Asn661, Asn835, Asn881, Asn929, and Asn957.

The protein belongs to the glycosyl hydrolase 31 family.

The catalysed reaction is Hydrolysis of terminal, non-reducing (1-&gt;4)-linked alpha-D-glucose residues with release of alpha-D-glucose.. Functionally, hydrolyzes malto-oligosaccharides, but has a low activity toward soluble starch. This Aspergillus oryzae (strain ATCC 42149 / RIB 40) (Yellow koji mold) protein is Alpha-glucosidase (agdA).